A 934-amino-acid chain; its full sequence is Bifunctional uridylyltransferase/uridylyl-removing enzyme (934 aa).

Residues 1 to 379 (MSAHDLKLEE…TFSRRKRKLS (379 aa)) form a uridylyltransferase region. Residues 380–736 (DDGAFISENH…AKPHAFEAVT (357 aa)) form a uridylyl-removing region. The region spanning 496-613 (VDEHLLRCIA…IDFADTVQTM (118 aa)) is the HD domain. 2 ACT domains span residues 737–818 (EITV…DMLA) and 848–931 (VIEV…RSPQ).

The protein belongs to the GlnD family. Mg(2+) serves as cofactor.

It carries out the reaction [protein-PII]-L-tyrosine + UTP = [protein-PII]-uridylyl-L-tyrosine + diphosphate. It catalyses the reaction [protein-PII]-uridylyl-L-tyrosine + H2O = [protein-PII]-L-tyrosine + UMP + H(+). Uridylyltransferase (UTase) activity is inhibited by glutamine, while glutamine activates uridylyl-removing (UR) activity. Its function is as follows. Modifies, by uridylylation and deuridylylation, the PII regulatory proteins (GlnB and homologs), in response to the nitrogen status of the cell that GlnD senses through the glutamine level. Under low glutamine levels, catalyzes the conversion of the PII proteins and UTP to PII-UMP and PPi, while under higher glutamine levels, GlnD hydrolyzes PII-UMP to PII and UMP (deuridylylation). Thus, controls uridylylation state and activity of the PII proteins, and plays an important role in the regulation of nitrogen assimilation and metabolism. This chain is Bifunctional uridylyltransferase/uridylyl-removing enzyme, found in Brucella suis biovar 1 (strain 1330).